We begin with the raw amino-acid sequence, 164 residues long: Protein-export protein SecB (164 aa).

Belongs to the SecB family. As to quaternary structure, homotetramer, a dimer of dimers. One homotetramer interacts with 1 SecA dimer.

The protein localises to the cytoplasm. One of the proteins required for the normal export of preproteins out of the cell cytoplasm. It is a molecular chaperone that binds to a subset of precursor proteins, maintaining them in a translocation-competent state. It also specifically binds to its receptor SecA. The chain is Protein-export protein SecB from Burkholderia orbicola (strain MC0-3).